The sequence spans 98 residues: Cystatin-B (98 aa).

Met1 carries the N-acetylmethionine modification. The Secondary area of contact signature appears at 46–50 (QVVAG).

It belongs to the cystatin family. In terms of assembly, able to form dimers stabilized by noncovalent forces.

It is found in the cytoplasm. It localises to the nucleus. Functionally, this is an intracellular thiol proteinase inhibitor. Tightly binding reversible inhibitor of cathepsins L, H and B. This chain is Cystatin-B (CSTB), found in Macaca fuscata fuscata (Japanese macaque).